The primary structure comprises 791 residues: Vezatin (791 aa).

The next 2 membrane-spanning stretches (helical) occupy residues 138–158 (IATP…ALAA) and 163–183 (SISS…FTVL). Residues 435–464 (VRSLQLHLKALLNEVIILEDELEKLSSCKE) adopt a coiled-coil conformation. Acidic residues predominate over residues 752–769 (GDEWDDDDDDNDNDDDNY). The segment at 752 to 791 (GDEWDDDDDDNDNDDDNYDQVKNVESHEKERNNVSLQLEE) is disordered. The span at 773–783 (KNVESHEKERN) shows a compositional bias: basic and acidic residues.

It belongs to the vezatin family. As to quaternary structure, interacts with myosin VIIa and the cadherin-catenins complex.

The protein resides in the cell membrane. It is found in the cell junction. The protein localises to the adherens junction. It localises to the nucleus. In terms of biological role, plays a pivotal role in the establishment of adherens junctions and their maintenance in adult life. This is Vezatin (vezt) from Xenopus tropicalis (Western clawed frog).